The chain runs to 260 residues: O-antigen export system permease protein RfbA (260 aa).

A run of 7 helical transmembrane segments spans residues 31–51, 63–83, 109–129, 139–159, 173–193, 201–221, and 229–249; these read FLGF…YVLL, FPFF…SVGG, VVVT…VLGM, VVLF…LTYI, IVSN…PLST, SLML…AIFY, and EPLM…SSIF. An ABC transmembrane type-2 domain is found at 32 to 252; the sequence is LGFLWTFLNP…WAASSIFESR (221 aa).

This sequence belongs to the ABC-2 integral membrane protein family.

The protein localises to the cell inner membrane. Functionally, may form an ATP-driven O-antigen export apparatus, in association with RfbB. This chain is O-antigen export system permease protein RfbA (rfbA), found in Myxococcus xanthus.